We begin with the raw amino-acid sequence, 270 residues long: Putative pyruvate, phosphate dikinase regulatory protein (270 aa).

151–158 (GVSRTSKT) provides a ligand contact to ADP.

This sequence belongs to the pyruvate, phosphate/water dikinase regulatory protein family. PDRP subfamily.

The catalysed reaction is N(tele)-phospho-L-histidyl/L-threonyl-[pyruvate, phosphate dikinase] + ADP = N(tele)-phospho-L-histidyl/O-phospho-L-threonyl-[pyruvate, phosphate dikinase] + AMP + H(+). It catalyses the reaction N(tele)-phospho-L-histidyl/O-phospho-L-threonyl-[pyruvate, phosphate dikinase] + phosphate + H(+) = N(tele)-phospho-L-histidyl/L-threonyl-[pyruvate, phosphate dikinase] + diphosphate. Bifunctional serine/threonine kinase and phosphorylase involved in the regulation of the pyruvate, phosphate dikinase (PPDK) by catalyzing its phosphorylation/dephosphorylation. This chain is Putative pyruvate, phosphate dikinase regulatory protein, found in Bacillus velezensis (strain DSM 23117 / BGSC 10A6 / LMG 26770 / FZB42) (Bacillus amyloliquefaciens subsp. plantarum).